The following is a 435-amino-acid chain: Type A flavoprotein fprA (435 aa).

A zinc metallo-hydrolase region spans residues 48 to 228; that stretch reads ANGTTYNAYA…PFRSFVAQVL (181 aa). Residues His-98, Glu-100, Asp-102, His-167, Asp-186, and His-243 each coordinate Fe cation. The Flavodoxin-like domain occupies 276 to 415; that stretch reads LLIFYVSAYR…EGRAFGRRLA (140 aa).

This sequence in the N-terminal section; belongs to the zinc metallo-hydrolase group 3 family. In terms of assembly, homodimer. The cofactor is FMN. Requires Fe cation as cofactor.

Functionally, low-potential electron donor to a number of redox enzymes. The chain is Type A flavoprotein fprA (fprA) from Rhodobacter capsulatus (Rhodopseudomonas capsulata).